The sequence spans 528 residues: Ivanolysin (528 aa).

Residues 1 to 23 (MKKIMLLLMTLLLVSLPLAQEAQ) form the signal peptide. Transmembrane regions (beta stranded) follow at residues 213–226 (ESQLVAKFGAAFKA), 233–242 (VNFGAISEGK), 311–320 (STRVKAAFDT), and 328–340 (KGDTELENIIQNA). Residues 482 to 492 (ECTGLAWEWWR) carry the Conserved undecapeptide motif. The Cholesterol binding signature appears at 514 to 515 (TL).

It belongs to the cholesterol-dependent cytolysin family. Homooligomeric pore complex of 35 to 50 subunits; when inserted in the host membrane.

It is found in the secreted. Its subcellular location is the host membrane. A cholesterol-dependent toxin that causes cytolysis by forming pores in cholesterol containing host membranes. After binding to target membranes, the protein undergoes a major conformation change, leading to its insertion in the host membrane and formation of an oligomeric pore complex. Cholesterol is required for binding to host membranes, membrane insertion and pore formation; cholesterol binding is mediated by a Thr-Leu pair in the C-terminus. Can be reversibly inactivated by oxidation. The protein is Ivanolysin (ilo) of Listeria ivanovii.